The chain runs to 35 residues: Conotoxin Cal6.1g (35 aa).

Residues 1–8 (GLSRPSKR) constitute a propeptide that is removed on maturation. Cystine bridges form between cysteine 9/cysteine 25, cysteine 16/cysteine 29, and cysteine 24/cysteine 34.

It belongs to the conotoxin O1 superfamily. As to expression, expressed by the venom duct.

The protein localises to the secreted. Functionally, probable neurotoxin with unknown target. Possibly targets ion channels. The protein is Conotoxin Cal6.1g of Californiconus californicus (California cone).